The following is a 286-amino-acid chain: Movement protein (286 aa).

The protein belongs to the tenuiviruses pc4 protein family. As to quaternary structure, interacts with the rice proteins DJA6 and HSP17.9A.

It is found in the host cytoplasm. Functionally, transports viral genome to neighboring plant cells directly through plasmosdesmata, without any budding. The movement protein allows efficient cell to cell propagation, by bypassing the host cell wall barrier. The protein is Movement protein of Avena sativa (Oat).